Reading from the N-terminus, the 596-residue chain is Estrogen receptor (596 aa).

Positions 1 to 185 (MTMTLHTKAS…AMESAKETRY (185 aa)) are modulating (transactivation AF-1); mediates interaction with MACROD1. O-linked (GlcNAc) serine glycosylation is present at S10. Positions 36–48 (ERPLGEVYMDSSK) are required for interaction with NCOA1. Residues 36–175 (ERPLGEVYMD…LASTSDKGSM (140 aa)) form an interaction with DDX5; self-association region. A phosphoserine; by CDK2 mark is found at S104 and S106. At S119 the chain carries Phosphoserine. The interval 144 to 175 (EAGPPAYYRPNSDNRRQGGRERLASTSDKGSM) is disordered. The span at 155-166 (SDNRRQGGRERL) shows a compositional bias: basic and acidic residues. S168 carries the phosphoserine; by CK2 modification. 2 consecutive NR C4-type zinc fingers follow at residues 186-206 (CAVCNDYASGYHYGVWSCEGC) and 222-246 (CPATNQCTIDKNRRKSCQACRLRKC). The segment at residues 186–251 (CAVCNDYASG…RLRKCYEVGM (66 aa)) is a DNA-binding region (nuclear receptor). The interval 186 to 311 (CAVCNDYASG…TKKNSPVLSL (126 aa)) is mediates interaction with DNTTIP2. A hinge region spans residues 252-311 (MKGGIRKDRRGGRMLKHKRQRDDGEGRNEAVPSGDMRAANLWPSPIMIKHTKKNSPVLSL). Basic residues predominate over residues 259–270 (DRRGGRMLKHKR). The tract at residues 259-285 (DRRGGRMLKHKRQRDDGEGRNEAVPSG) is disordered. R261 is modified (asymmetric dimethylarginine; by PRMT1). The segment at 263 to 596 (GRMLKHKRQR…GEAENFPSTV (334 aa)) is interaction with AKAP13. Residues 265 to 595 (MLKHKRQRDD…TGEAENFPST (331 aa)) form a self-association region. The NR LBD domain maps to 312 to 548 (TADQMISALL…DLLLEMLDAH (237 aa)). The tract at residues 312–595 (TADQMISALL…TGEAENFPST (284 aa)) is transactivation AF-2. 2 residues coordinate 17beta-estradiol: E354 and R395. C448 carries S-palmitoyl cysteine lipidation. A 17beta-estradiol-binding site is contributed by H525. Y538 carries the phosphotyrosine; by Tyr-kinases modification. T572 is a glycosylation site (O-linked (GlcNAc) threonine).

The protein belongs to the nuclear hormone receptor family. NR3 subfamily. Binds DNA as a homodimer. Can form a heterodimer with ESR2. Interacts with coactivator NCOA5. Interacts with PELP1, the interaction is enhanced by 17-beta-estradiol; the interaction increases ESR1 transcriptional activity. Interacts with NCOA7; the interaction is ligand-inducible. Interacts with AKAP13, CUEDC2, HEXIM1, KDM5A, MAP1S, SMARD1, and UBE1C. Interacts with MUC1; the interaction is stimulated by 7 beta-estradiol (E2) and enhances ESR1-mediated transcription. Interacts with DNTTIP2, and UIMC1. Interacts with KMT2D/MLL2. Interacts with ATAD2; the interaction is enhanced by estradiol. Interacts with KIF18A and LDB1. Interacts with RLIM (via its C-terminus). Interacts with MACROD1. Interacts with SH2D4A and PLCG. Interacts with SH2D4A; the interaction blocks binding to PLCG and inhibits estrogen-induced cell proliferation. Interacts with DYNLL1. Interacts with CCDC62; the interaction requires estradiol and appears to enhance the transcription of target genes. Interacts with NR2C1; the interaction prevents homodimerization of ESR1 and suppresses its transcriptional activity and cell growth. Interacts with DNAAF4. Interacts with PRMT2. Interacts with RBFOX2. Interacts with EP300; the interaction is estrogen-dependent and enhanced by CITED1. Interacts with CITED1; the interaction is estrogen-dependent. Interacts with FAM120B, FOXL2, PHB2 and SLC30A9. Interacts with coactivators NCOA3 and NCOA6. Interacts with STK3/MST2 only in the presence of SAV1 and vice-versa. Binds to CSNK1D. Interacts with NCOA2; NCOA2 can interact with ESR1 AF-1 and AF-2 domains simultaneously and mediate their transcriptional synergy. Interacts with DDX5. Interacts with NCOA1; the interaction seems to require a self-association of N-terminal and C-terminal regions. Interacts with ZNF366, DDX17, NFKB1, RELA, SP1 and SP3. Interacts with NRIP1. Interacts with GPER1; the interaction occurs in an estrogen-dependent manner. Interacts with CLOCK and the interaction is stimulated by estrogen. Interacts with TRIP4 (ufmylated); estrogen dependent. Interacts with LMTK3; the interaction phosphorylates ESR1 (in vitro) and protects it against proteasomal degradation. Interacts with CCAR2 (via N-terminus) in a ligand-independent manner. Interacts with ZFHX3. Interacts with SFR1 in a ligand-dependent and -independent manner. Interacts with DCAF13, LATS1 and DCAF1; regulates ESR1 ubiquitination and ubiquitin-mediated proteasomal degradation. Interacts (via DNA-binding domain) with POU4F2 (C-terminus); this interaction increases the estrogen receptor ESR1 transcriptional activity in a DNA- and ligand 17-beta-estradiol-independent manner. Interacts with ESRRB isoform 1. Interacts with UBE3A and WBP2. Interacts with GTF2B. Interacts with RBM39. In the absence of hormonal ligand, interacts with TACC1. Interacts with PI3KR1 or PI3KR2 and PTK2/FAK1. Interacts with SRC. Interacts with BAG1; the interaction is promoted in the absence of estradiol (17-beta-estradiol/E2). Interacts with and ubiquitinated by STUB1; the interaction is promoted in the absence of estradiol (17-beta-estradiol/E2). Interacts with NEDD8. Glycosylated; contains N-acetylglucosamine, probably O-linked. In terms of processing, ubiquitinated; regulated by LATS1 via DCAF1 it leads to ESR1 proteasomal degradation. Deubiquitinated by OTUB1. Ubiquitinated by STUB1/CHIP; in the CA1 hippocampal region following loss of endogenous circulating estradiol (17-beta-estradiol/E2). Ubiquitinated by UBR5, leading to its degradation: UBR5 specifically recognizes and binds ligand-bound ESR1 when it is not associated with coactivators (NCOAs). In presence of NCOAs, the UBR5-degron is not accessible, preventing its ubiquitination and degradation. Post-translationally, phosphorylated by cyclin A/CDK2 and CK1. Phosphorylation probably enhances transcriptional activity. Dephosphorylation at Ser-119 by PPP5C inhibits its transactivation activity. Phosphorylated by LMTK3 (in vitro). Palmitoylated at Cys-448 by ZDHHC7 and ZDHHC21. Palmitoylation is required for plasma membrane targeting and for rapid intracellular signaling via ERK and AKT kinases and cAMP generation, but not for signaling mediated by the nuclear hormone receptor. In terms of processing, dimethylated by PRMT1 at Arg-261. The methylation may favor cytoplasmic localization. Demethylated by JMJD6 at Arg-261.

It is found in the nucleus. Its subcellular location is the cytoplasm. The protein resides in the golgi apparatus. It localises to the cell membrane. Its function is as follows. Nuclear hormone receptor. The steroid hormones and their receptors are involved in the regulation of eukaryotic gene expression and affect cellular proliferation and differentiation in target tissues. Ligand-dependent nuclear transactivation involves either direct homodimer binding to a palindromic estrogen response element (ERE) sequence or association with other DNA-binding transcription factors, such as AP-1/c-Jun, c-Fos, ATF-2, Sp1 and Sp3, to mediate ERE-independent signaling. Ligand binding induces a conformational change allowing subsequent or combinatorial association with multiprotein coactivator complexes through LXXLL motifs of their respective components. Mutual transrepression occurs between the estrogen receptor (ER) and NF-kappa-B in a cell-type specific manner. Decreases NF-kappa-B DNA-binding activity and inhibits NF-kappa-B-mediated transcription from the IL6 promoter and displace RELA/p65 and associated coregulators from the promoter. Recruited to the NF-kappa-B response element of the CCL2 and IL8 promoters and can displace CREBBP. Present with NF-kappa-B components RELA/p65 and NFKB1/p50 on ERE sequences. Can also act synergistically with NF-kappa-B to activate transcription involving respective recruitment adjacent response elements; the function involves CREBBP. Can activate the transcriptional activity of TFF1. Also mediates membrane-initiated estrogen signaling involving various kinase cascades. Essential for MTA1-mediated transcriptional regulation of BRCA1 and BCAS3. Maintains neuronal survival in response to ischemic reperfusion injury when in the presence of circulating estradiol (17-beta-estradiol/E2). In Bos taurus (Bovine), this protein is Estrogen receptor (ESR1).